Here is a 1081-residue protein sequence, read N- to C-terminus: Inversin (1081 aa).

16 ANK repeats span residues 13 to 42 (SLAS…ALKD), 47 to 76 (FGRT…DVNK), 80 to 110 (SQRT…WMQK), 113 to 144 (EEMT…EVDT), 148 to 177 (NKQT…NIGI), 181 to 213 (EGKI…TESL), 220 to 250 (EGRT…NITS), 254 to 283 (LFRT…SGTI), 288 to 317 (QGAT…VKDD), 321 to 350 (EGRT…DIDI), 356 to 385 (YGGT…QVDA), 389 to 418 (MKHT…RVDL), 422 to 451 (DGHS…NPNV), 455 to 484 (AGRT…DPNI), 488 to 517 (EGRT…FPNQ), and 523 to 553 (ERYT…SIAA). The residue at position 75 (asparagine 75) is a 3-hydroxyasparagine. Positions 490 to 498 (RTALHWSCN) match the D-box 1 motif. Residues 555-584 (QDIAAFKIQAVYKGYKVRKAFRDRKNLLMK) form the IQ 1 domain. The span at 589-610 (RKDAAAKKREEENKRREAEQQK) shows a compositional bias: basic and acidic residues. The interval 589–889 (RKDAAAKKRE…PAPGPLSGQS (301 aa)) is disordered. Positions 638-649 (RAPSKQPPSSEA) are enriched in polar residues. Composition is skewed to basic and acidic residues over residues 688–698 (KPNESPREQCK), 724–740 (EKSR…DKGK), and 772–785 (DGHR…DTAS). The span at 863 to 872 (SGTSTLSEDA) shows a compositional bias: polar residues. Positions 910 to 918 (RKELFRKKN) match the D-box 2 motif. Residues 917–946 (KNKAAAVIQRAWRSYQLRKHLSHLLHMKEL) form the IQ 2 domain. The ANK 17 repeat unit spans residues 1022 to 1050 (RTHSVLHLNSVSNLQCIHLLENSGRSKNF). The segment covering 1051 to 1061 (SYNLQSATPPK) has biased composition (polar residues). The disordered stretch occupies residues 1051 to 1081 (SYNLQSATPPKTKTKLRPSLEEECVRGSWNS).

Binds calmodulin via its IQ domains. Interacts with APC2. Interacts with alpha-, beta-, and gamma-catenin. Interacts with N-cadherin (CDH2). Interacts with NPHP1. Interacts with DVL1, PRICKLE (PRICKLE1 or PRICKLE2) and Strabismus (VANGL1 or VANGL2). Component of a complex containing at least ANKS6, INVS, NEK8 and NPHP3. ANKS6 may organize complex assembly by linking INVS and NPHP3 to NEK8 and INVS may target the complex to the proximal ciliary axoneme. Interacts with IQCB1; the interaction likely requires additional interactors. Interacts with microtubules. May be ubiquitinated via its interaction with APC2. In terms of processing, hydroxylated at Asn-75, most probably by HIF1AN.

The protein resides in the cytoplasm. It is found in the cytoskeleton. The protein localises to the membrane. Its subcellular location is the spindle. It localises to the nucleus. Required for normal renal development and establishment of left-right axis. Probably acts as a molecular switch between different Wnt signaling pathways. Inhibits the canonical Wnt pathway by targeting cytoplasmic disheveled (DVL1) for degradation by the ubiquitin-proteasome. This suggests that it is required in renal development to oppose the repression of terminal differentiation of tubular epithelial cells by Wnt signaling. Involved in the organization of apical junctions in kidney cells together with NPHP1, NPHP4 and RPGRIP1L/NPHP8. Does not seem to be strictly required for ciliogenesis. The sequence is that of Inversin (INVS) from Canis lupus familiaris (Dog).